Consider the following 177-residue polypeptide: MNGGHIQLIIGPMFSGKSTELIRRVRRYQIAQYKCVTIKYSNDNRYGTGLWTHDKNNFEALEATKLCDVLEAITDFSVIGIDEGQFFPDIVEFCERMANEGKIVIVAALDGTFQRKPFNNILDLIPLSEMVVKLTAVCMKCFKEASFSKRLGAETKIEIIGGIDMYQSVCRKCYIDS.

11–18 (GPMFSGKS) lines the ATP pocket. The active-site Proton acceptor is the E83. F113 lines the substrate pocket. Residues C138 and C141 each contribute to the Zn(2+) site. 157–161 (IEIIG) lines the substrate pocket. 2 residues coordinate Zn(2+): C170 and C173.

Belongs to the thymidine kinase family. In terms of assembly, homotetramer. Two molecules of substrate bind to each enzyme tetramer.

The catalysed reaction is thymidine + ATP = dTMP + ADP + H(+). Functionally, phosphorylates thymidine and thymidine analogs, such as azidothymidine (AZT). Part of the salvage pathway for pyrimidine deoxyribonucleotide synthesis. In Variola virus, this protein is Thymidine kinase (OPG101).